Reading from the N-terminus, the 32-residue chain is Cytochrome b6-f complex subunit 7 (32 aa).

The chain crosses the membrane as a helical span at residues phenylalanine 5–alanine 25.

Belongs to the PetM family. In terms of assembly, the 4 large subunits of the cytochrome b6-f complex are cytochrome b6, subunit IV (17 kDa polypeptide, PetD), cytochrome f and the Rieske protein, while the 4 small subunits are PetG, PetL, PetM and PetN. The complex functions as a dimer.

Its subcellular location is the plastid. The protein localises to the chloroplast thylakoid membrane. In terms of biological role, component of the cytochrome b6-f complex, which mediates electron transfer between photosystem II (PSII) and photosystem I (PSI), cyclic electron flow around PSI, and state transitions. The chain is Cytochrome b6-f complex subunit 7 from Guillardia theta (Cryptophyte).